We begin with the raw amino-acid sequence, 503 residues long: Maturase K (503 aa).

Belongs to the intron maturase 2 family. MatK subfamily.

The protein resides in the plastid. It localises to the chloroplast. In terms of biological role, usually encoded in the trnK tRNA gene intron. Probably assists in splicing its own and other chloroplast group II introns. The protein is Maturase K of Kunzea baxteri (Scarlet kunzea).